The chain runs to 514 residues: Ankyrin repeat domain-containing protein 34B (514 aa).

ANK repeat units follow at residues 9-38 (SEGN…YINE), 42-79 (RGET…DPNI), 83-113 (SGKT…DLSL), and 117-146 (SSYS…AKGK). The tract at residues 220-249 (NDDTWDPGSPVRKPALAPKGPKLPHAPPWV) is disordered. At Ser-263 the chain carries Phosphoserine. At Thr-272 the chain carries Phosphothreonine. Phosphoserine is present on Ser-296.

The protein belongs to the ANKRD34 family. Phosphorylated.

It is found in the cytoplasm. The protein resides in the nucleus. The polypeptide is Ankyrin repeat domain-containing protein 34B (ANKRD34B) (Homo sapiens (Human)).